A 329-amino-acid chain; its full sequence is Quinone-oxidoreductase homolog, chloroplastic (329 aa).

It belongs to the zinc-containing alcohol dehydrogenase family. Quinone oxidoreductase subfamily. Post-translationally, the transit peptide is not cleaved.

It is found in the plastid. Its subcellular location is the chloroplast inner membrane. The chain is Quinone-oxidoreductase homolog, chloroplastic (QOR) from Spinacia oleracea (Spinach).